The following is a 616-amino-acid chain: Cytochrome c oxidase subunit 1 (616 aa).

Residues 28 to 48 (HLYLISGGFFFLLGGLEALFI) form a helical membrane-spanning segment. His-72 serves as a coordination point for Fe(II)-heme a. 6 helical membrane-spanning segments follow: residues 75–95 (TMIF…VVPL), 102–122 (VAFP…GLFL), 158–178 (GLQI…VTII), 198–218 (FVTS…LIFM), 243–263 (LFWV…FGIF), and 275–295 (LFGY…GFMV). His-249 and Tyr-253 together coordinate Cu cation. The segment at residues 249 to 253 (HPEVY) is a cross-link (1'-histidyl-3'-tyrosine (His-Tyr)). The Cu cation site is built by His-298 and His-299. 7 helical membrane passes run 303 to 323 (VGMG…IAVP), 349 to 369 (AVAF…LASA), 380 to 400 (FVVA…LLAG), 420 to 440 (ITFW…HFLG), 463 to 483 (ISTI…INIV), 553 to 573 (SSFL…GFTY), and 577 to 597 (AGWG…SMFL). Fe(II)-heme o is bound at residue His-384. Position 384 (His-384) interacts with heme a3. His-386 provides a ligand contact to Fe(II)-heme a.

This sequence belongs to the heme-copper respiratory oxidase family. Cu(2+) serves as cofactor. Heme is required as a cofactor.

The protein resides in the cell membrane. The enzyme catalyses 4 Fe(II)-[cytochrome c] + O2 + 8 H(+)(in) = 4 Fe(III)-[cytochrome c] + 2 H2O + 4 H(+)(out). Its pathway is energy metabolism; oxidative phosphorylation. Cytochrome c oxidase is the component of the respiratory chain that catalyzes the reduction of oxygen to water. Subunits 1-3 form the functional core of the enzyme complex. Co I is the catalytic subunit of the enzyme. Electrons originating in cytochrome c are transferred via the copper A center of subunit 2 and heme a of subunit 1 to the bimetallic center formed by heme a3 and copper B. This cytochrome c oxidase shows proton pump activity across the membrane in addition to the electron transfer. The protein is Cytochrome c oxidase subunit 1 (ctaD) of Bacillus sp. (strain PS3).